The sequence spans 143 residues: Large ribosomal subunit protein bL28c (143 aa).

The N-terminal 66 residues, 1–66 (MTTMATQGAW…SFPGIQPIVA (66 aa)), are a transit peptide targeting the chloroplast.

It belongs to the bacterial ribosomal protein bL28 family. Part of the 50S ribosomal subunit.

The protein localises to the plastid. It localises to the chloroplast. This Arabidopsis thaliana (Mouse-ear cress) protein is Large ribosomal subunit protein bL28c (RPL28).